We begin with the raw amino-acid sequence, 882 residues long: MRTAEIREKFLSFFEGKGHLRLPSFSLIPEDDPSLLFTSAGMAPLKPYFLGAKPIFGGREWRRVTTCQECLRVGDIENVGRTSRHNTYFEMLGNFSFGDYFKKEAILWAWEFLTEHLKLDPGRLWVTVFEDDDEAYEIWRDLVGVPEERIGRFGEDENYWPGGAITHGPNGPSGPCSEIFYDRGPAYGTPDETGPNTGSGDRFVEIWNLVFTQYDRQGPIPGPGILKPLPQKNIDTGMGLYRVAAILQDVEDFYRTDTFFPIIQEVARMSGRPYEGKTSVSHRVIADHVRAVVAALSDGATFSNTGRGYVIRRLLRRALRHGYLLGLSDPFLHRLAPLVAELLGDFYPEMRENLPAVEKQIRLEEERFLETLEGGLKRLDALLSGLKPGEVLPGKEAFRLYDTYGFPLDLTVEIAAERGYGVDTEGFQKAMEEQQSRSRAAMAFEREIFKKGAQVLEELYAERGATEFLGYNALEAEAEVLALLAGDQSLLEAGPGTEVQVVLDKTPFYAEGGGQIGDFGLLEWPGGRARVETTRKTERGIFLHKARVEEGVLRVGERVRAVVDPRRRDTERNHTATHLLHAALRAVLGPHVRQAGSLVAPDRLRFDFTHPEPLKPEELERVELLVNRWIMADFPVTWRYMPLEEARKEGAMALFGEKYGEVVRVVRVEGSPLEGLESKELCGGCHVRRTGEIGAFLIRSEEAVSAGVRRIEAVTGEEAIRFARGSLNRLKALAERLEVGEAALEERLEKLLAELKEKEREVESLKARLVQAALGGGGGASLEEKGGLRWTVAELPGLDAKALRQAADDLVARGADVALVLSGGQAVLKLSPKAQGMGLEAGALFRALAEKAGGRGGGKGALAQGGGLDPRKAREALPGLLP.

Residues His574, His578, Cys682, and His686 each contribute to the Zn(2+) site. Residues Gly853–Pro882 form a disordered region. The segment covering Gly854–Leu868 has biased composition (gly residues).

This sequence belongs to the class-II aminoacyl-tRNA synthetase family. Requires Zn(2+) as cofactor.

It localises to the cytoplasm. The enzyme catalyses tRNA(Ala) + L-alanine + ATP = L-alanyl-tRNA(Ala) + AMP + diphosphate. In terms of biological role, catalyzes the attachment of alanine to tRNA(Ala) in a two-step reaction: alanine is first activated by ATP to form Ala-AMP and then transferred to the acceptor end of tRNA(Ala). Also edits incorrectly charged Ser-tRNA(Ala) and Gly-tRNA(Ala) via its editing domain. This is Alanine--tRNA ligase from Thermus thermophilus (strain ATCC 27634 / DSM 579 / HB8).